The primary structure comprises 633 residues: Glutamyl-tRNA(Gln) amidotransferase subunit E (633 aa).

It belongs to the GatB/GatE family. GatE subfamily. Heterodimer of GatD and GatE.

The enzyme catalyses L-glutamyl-tRNA(Gln) + L-glutamine + ATP + H2O = L-glutaminyl-tRNA(Gln) + L-glutamate + ADP + phosphate + H(+). In terms of biological role, allows the formation of correctly charged Gln-tRNA(Gln) through the transamidation of misacylated Glu-tRNA(Gln) in organisms which lack glutaminyl-tRNA synthetase. The reaction takes place in the presence of glutamine and ATP through an activated gamma-phospho-Glu-tRNA(Gln). The GatDE system is specific for glutamate and does not act on aspartate. This chain is Glutamyl-tRNA(Gln) amidotransferase subunit E, found in Methanococcus vannielii (strain ATCC 35089 / DSM 1224 / JCM 13029 / OCM 148 / SB).